The primary structure comprises 229 residues: ATP synthase subunit a (229 aa).

The next 6 helical transmembrane spans lie at 25-45, 82-102, 104-124, 142-162, 181-201, and 202-222; these read ADAI…SMLA, FFPL…IGLV, GFFP…IVFV, FLGP…IGHF, LVLM…MMLM, and GVLV…IYIQ.

Belongs to the ATPase A chain family. As to quaternary structure, F-type ATPases have 2 components, CF(1) - the catalytic core - and CF(0) - the membrane proton channel. CF(1) has five subunits: alpha(3), beta(3), gamma(1), delta(1), epsilon(1). CF(0) has three main subunits: a(1), b(2) and c(9-12). The alpha and beta chains form an alternating ring which encloses part of the gamma chain. CF(1) is attached to CF(0) by a central stalk formed by the gamma and epsilon chains, while a peripheral stalk is formed by the delta and b chains.

The protein localises to the cell inner membrane. Functionally, key component of the proton channel; it plays a direct role in the translocation of protons across the membrane. This is ATP synthase subunit a from Geotalea uraniireducens (strain Rf4) (Geobacter uraniireducens).